The chain runs to 451 residues: Trigger factor (451 aa).

The PPIase FKBP-type domain occupies 165–250; that stretch reads DDKLTIDFEG…LHQIQAREAL (86 aa).

The protein belongs to the FKBP-type PPIase family. Tig subfamily.

It localises to the cytoplasm. It carries out the reaction [protein]-peptidylproline (omega=180) = [protein]-peptidylproline (omega=0). Its function is as follows. Involved in protein export. Acts as a chaperone by maintaining the newly synthesized protein in an open conformation. Functions as a peptidyl-prolyl cis-trans isomerase. This Helicobacter pylori (strain HPAG1) protein is Trigger factor.